A 61-amino-acid polypeptide reads, in one-letter code: U-poneritoxin(01)-Om5a (61 aa).

An N-terminal signal peptide occupies residues 1–23; that stretch reads MKLSALSLAFAIILMMTIMYTKA. Residues 24-41 constitute a propeptide that is removed on maturation; that stretch reads DADASADAEADADAEAEA. At glutamine 59 the chain carries Glutamine amide.

Belongs to the formicidae venom precursor-01 superfamily. Truncated sequences of this peptide have also been found in the venom. It is possible they have been cleaved in the venom. As to expression, expressed by the venom gland.

It localises to the secreted. Its function is as follows. Acidic peptide with potent hemolytic activities (94.8% at 50 uM). It also shows low antimicrobial activities against E.coli (MIC=50uM), as well as histamine-releasing activity (28.3% at 10 uM). Does not have activity against S.aureus, and S.cerevisiae. This Odontomachus monticola (Trap-jaw ant) protein is U-poneritoxin(01)-Om5a.